Here is a 157-residue protein sequence, read N- to C-terminus: Anaerobic nitrite reductase Hb1 (157 aa).

The Globin domain maps to 5–154 (GFTEEQEALV…LAEAIKSEMK (150 aa)). The Homodimerization motif lies at 38 to 42 (EIAPA). Heme b contacts are provided by Ser-48, Lys-62, His-66, Arg-96, Thr-100, and His-101. Residues 108 to 120 (AEHFEVTKLALLE) carry the Homodimerization motif.

This sequence belongs to the plant globin family. Homodimer. Heme b serves as cofactor. As to expression, predominantly expressed in leaves, to a lower extent in roots, and barely in stems, flowers and seeds.

Its subcellular location is the cytoplasm. It is found in the nucleus. The catalysed reaction is Fe(III)-heme b-[protein] + nitric oxide + H2O = Fe(II)-heme b-[protein] + nitrite + 2 H(+). Its function is as follows. Phytoglobin that reduces nitrite to nitric oxide (NO) under anoxic conditions (e.g. during flooding or in waterlogged soil) and upon root nodulation. Required for general plant development and during nodulation, especially for the onset of symbiosis. Monitors nitric oxide (NO) levels during early phase of the nitrogen-fixing symbiosis and buffers oxygen in functioning nodules. May not function as an oxygen storage or transport protein. Has an unusually high affinity for O(2) through a hexacoordinate heme iron because of a very low dissociation constant. Involved in water stress tolerance. This is Anaerobic nitrite reductase Hb1 from Glycine max (Soybean).